The sequence spans 442 residues: Chromosomal replication initiator protein DnaA (442 aa).

Positions 1–75 are domain I, interacts with DnaA modulators; the sequence is MDAWPRCLER…GNGEVALAVG (75 aa). Residues 75 to 104 form a domain II region; that stretch reads GSRPRAPEPLPAPQAVASAPAAAPIVPFAG. Residues 105–322 are domain III, AAA+ region; it reads NLDSHYTFAN…GALNTLVARA (218 aa). Residues G150, G152, K153, and T154 each contribute to the ATP site. A domain IV, binds dsDNA region spans residues 323–442; that stretch reads NFTGRSITVE…WEKLIRKLSE (120 aa).

Belongs to the DnaA family. Oligomerizes as a right-handed, spiral filament on DNA at oriC.

Its subcellular location is the cytoplasm. In terms of biological role, plays an essential role in the initiation and regulation of chromosomal replication. ATP-DnaA binds to the origin of replication (oriC) to initiate formation of the DNA replication initiation complex once per cell cycle. Binds the DnaA box (a 9 base pair repeat at the origin) and separates the double-stranded (ds)DNA. Forms a right-handed helical filament on oriC DNA; dsDNA binds to the exterior of the filament while single-stranded (ss)DNA is stabiized in the filament's interior. The ATP-DnaA-oriC complex binds and stabilizes one strand of the AT-rich DNA unwinding element (DUE), permitting loading of DNA polymerase. After initiation quickly degrades to an ADP-DnaA complex that is not apt for DNA replication. Binds acidic phospholipids. The protein is Chromosomal replication initiator protein DnaA of Xanthomonas campestris pv. campestris (strain 8004).